The following is a 201-amino-acid chain: Recombination protein RecR (201 aa).

Residues 60–75 form a C4-type zinc finger; sequence CSCCGNVDTIDPCTVC. In terms of domain architecture, Toprim spans 83-178; the sequence is AVIIVVEDVA…RITRLAHGVP (96 aa).

Belongs to the RecR family.

May play a role in DNA repair. It seems to be involved in an RecBC-independent recombinational process of DNA repair. It may act with RecF and RecO. This Sinorhizobium medicae (strain WSM419) (Ensifer medicae) protein is Recombination protein RecR.